The primary structure comprises 294 residues: Fructose-bisphosphate aldolase class 1 (294 aa).

Residue Glu176 is the Proton acceptor of the active site. Lys213 functions as the Schiff-base intermediate with dihydroxyacetone-P in the catalytic mechanism.

Belongs to the class I fructose-bisphosphate aldolase family.

The catalysed reaction is beta-D-fructose 1,6-bisphosphate = D-glyceraldehyde 3-phosphate + dihydroxyacetone phosphate. Its pathway is carbohydrate degradation; glycolysis; D-glyceraldehyde 3-phosphate and glycerone phosphate from D-glucose: step 4/4. This chain is Fructose-bisphosphate aldolase class 1, found in Oceanobacillus iheyensis (strain DSM 14371 / CIP 107618 / JCM 11309 / KCTC 3954 / HTE831).